We begin with the raw amino-acid sequence, 437 residues long: Glucose-1-phosphate adenylyltransferase (437 aa).

Residues Tyr-113, Gly-179, 194-195 (EK), and Ser-212 contribute to the alpha-D-glucose 1-phosphate site.

This sequence belongs to the bacterial/plant glucose-1-phosphate adenylyltransferase family. Homotetramer.

It carries out the reaction alpha-D-glucose 1-phosphate + ATP + H(+) = ADP-alpha-D-glucose + diphosphate. The protein operates within glycan biosynthesis; glycogen biosynthesis. Involved in the biosynthesis of ADP-glucose, a building block required for the elongation reactions to produce glycogen. Catalyzes the reaction between ATP and alpha-D-glucose 1-phosphate (G1P) to produce pyrophosphate and ADP-Glc. In Haemophilus influenzae (strain ATCC 51907 / DSM 11121 / KW20 / Rd), this protein is Glucose-1-phosphate adenylyltransferase.